Reading from the N-terminus, the 1015-residue chain is Beta-galactosidase (1015 aa).

The active-site Proton donor is the E434. The active-site Nucleophile is E513.

This sequence belongs to the glycosyl hydrolase 2 family. Requires Mg(2+) as cofactor. The cofactor is Mn(2+).

The enzyme catalyses Hydrolysis of terminal non-reducing beta-D-galactose residues in beta-D-galactosides.. This is Beta-galactosidase (lacZ) from Arthrobacter sp. (strain B7).